The following is a 102-amino-acid chain: Small ribosomal subunit protein uS10 (102 aa).

It belongs to the universal ribosomal protein uS10 family. Part of the 30S ribosomal subunit.

Its function is as follows. Involved in the binding of tRNA to the ribosomes. The polypeptide is Small ribosomal subunit protein uS10 (Bacillus cereus (strain G9842)).